Here is a 257-residue protein sequence, read N- to C-terminus: UPF0246 protein Shal_1126 (257 aa).

This sequence belongs to the UPF0246 family.

In Shewanella halifaxensis (strain HAW-EB4), this protein is UPF0246 protein Shal_1126.